We begin with the raw amino-acid sequence, 96 residues long: ESAT-6-like protein SAG0230 (96 aa).

The protein belongs to the WXG100 family. sagEsxA-like subfamily. In terms of assembly, homodimer.

The polypeptide is ESAT-6-like protein SAG0230 (Streptococcus agalactiae serotype V (strain ATCC BAA-611 / 2603 V/R)).